The chain runs to 49 residues: MRQKVTLACEQCGSRNYTTTKQMGRLGERLTANKFCSVCNKHTVHRETK.

Belongs to the bacterial ribosomal protein bL33 family.

The protein is Large ribosomal subunit protein bL33A of Geobacillus thermodenitrificans (strain NG80-2).